The sequence spans 293 residues: uncharacterized protein (293 aa).

The HTH lysR-type domain occupies 1-58 (MDLRRFITLKTVVEEGSFLRASQKLCCTQSTVTFHIQQLEQEFSVQLFEKIGRRMCLT). The H-T-H motif DNA-binding region spans 18-37 (FLRASQKLCCTQSTVTFHIQ).

The protein belongs to the LysR transcriptional regulatory family.

This is an uncharacterized protein from Escherichia coli (strain K12).